The chain runs to 438 residues: Glutamate--tRNA ligase 2 (438 aa).

The short motif at 6-16 (PSPTGDMHTGN) is the 'HIGH' region element. The 'KMSKS' region motif lies at 231–235 (KMSKR). Lys-234 serves as a coordination point for ATP.

It belongs to the class-I aminoacyl-tRNA synthetase family. Glutamate--tRNA ligase type 1 subfamily. Monomer.

It is found in the cytoplasm. The enzyme catalyses tRNA(Glu) + L-glutamate + ATP = L-glutamyl-tRNA(Glu) + AMP + diphosphate. Its function is as follows. Catalyzes the attachment of glutamate to tRNA(Glu) in a two-step reaction: glutamate is first activated by ATP to form Glu-AMP and then transferred to the acceptor end of tRNA(Glu). This Wolinella succinogenes (strain ATCC 29543 / DSM 1740 / CCUG 13145 / JCM 31913 / LMG 7466 / NCTC 11488 / FDC 602W) (Vibrio succinogenes) protein is Glutamate--tRNA ligase 2.